The chain runs to 179 residues: Large ribosomal subunit protein uL6 (179 aa).

The protein belongs to the universal ribosomal protein uL6 family. In terms of assembly, part of the 50S ribosomal subunit.

Its function is as follows. This protein binds to the 23S rRNA, and is important in its secondary structure. It is located near the subunit interface in the base of the L7/L12 stalk, and near the tRNA binding site of the peptidyltransferase center. This is Large ribosomal subunit protein uL6 from Clostridium perfringens (strain ATCC 13124 / DSM 756 / JCM 1290 / NCIMB 6125 / NCTC 8237 / Type A).